The primary structure comprises 219 residues: Thiamine-phosphate synthase (219 aa).

4-amino-2-methyl-5-(diphosphooxymethyl)pyrimidine contacts are provided by residues 48–52 (QLREK) and Asn-80. 2 residues coordinate Mg(2+): Asp-81 and Asp-100. Ser-119 serves as a coordination point for 4-amino-2-methyl-5-(diphosphooxymethyl)pyrimidine. 145-147 (TPT) is a 2-[(2R,5Z)-2-carboxy-4-methylthiazol-5(2H)-ylidene]ethyl phosphate binding site. Position 148 (Lys-148) interacts with 4-amino-2-methyl-5-(diphosphooxymethyl)pyrimidine. 2-[(2R,5Z)-2-carboxy-4-methylthiazol-5(2H)-ylidene]ethyl phosphate is bound by residues Gly-176 and 196–197 (VS).

Belongs to the thiamine-phosphate synthase family. It depends on Mg(2+) as a cofactor.

It carries out the reaction 2-[(2R,5Z)-2-carboxy-4-methylthiazol-5(2H)-ylidene]ethyl phosphate + 4-amino-2-methyl-5-(diphosphooxymethyl)pyrimidine + 2 H(+) = thiamine phosphate + CO2 + diphosphate. It catalyses the reaction 2-(2-carboxy-4-methylthiazol-5-yl)ethyl phosphate + 4-amino-2-methyl-5-(diphosphooxymethyl)pyrimidine + 2 H(+) = thiamine phosphate + CO2 + diphosphate. The enzyme catalyses 4-methyl-5-(2-phosphooxyethyl)-thiazole + 4-amino-2-methyl-5-(diphosphooxymethyl)pyrimidine + H(+) = thiamine phosphate + diphosphate. Its pathway is cofactor biosynthesis; thiamine diphosphate biosynthesis; thiamine phosphate from 4-amino-2-methyl-5-diphosphomethylpyrimidine and 4-methyl-5-(2-phosphoethyl)-thiazole: step 1/1. Condenses 4-methyl-5-(beta-hydroxyethyl)thiazole monophosphate (THZ-P) and 2-methyl-4-amino-5-hydroxymethyl pyrimidine pyrophosphate (HMP-PP) to form thiamine monophosphate (TMP). The sequence is that of Thiamine-phosphate synthase from Albidiferax ferrireducens (strain ATCC BAA-621 / DSM 15236 / T118) (Rhodoferax ferrireducens).